Consider the following 606-residue polypeptide: Prostaglandin G/H synthase 1 (606 aa).

An N-terminal signal peptide occupies residues 1–30 (MSRSSPSLRLPVLLLLLLLLLLPPPPPVLP). The 39-residue stretch at 38-76 (PVNPCCYFPCQHQGVCVRVALDRYQCDCTRTGYSGPNCT) folds into the EGF-like domain. Disulfide bonds link Cys-42-Cys-53, Cys-43-Cys-165, Cys-47-Cys-63, and Cys-65-Cys-75. Asn-74, Asn-110, and Asn-150 each carry an N-linked (GlcNAc...) asparagine glycan. His-213 (proton acceptor) is an active-site residue. The For cyclooxygenase activity role is filled by Tyr-391. His-394 is a binding site for heme b. Residue Asn-416 is glycosylated (N-linked (GlcNAc...) asparagine). A disulfide bond links Cys-575 and Cys-581.

It belongs to the prostaglandin G/H synthase family. Homodimer. Heme b serves as cofactor.

It localises to the microsome membrane. It is found in the endoplasmic reticulum membrane. The catalysed reaction is (5Z,8Z,11Z,14Z)-eicosatetraenoate + AH2 + 2 O2 = prostaglandin H2 + A + H2O. It catalyses the reaction (5Z,8Z,11Z,14Z)-eicosatetraenoate + 2 O2 = prostaglandin G2. The enzyme catalyses prostaglandin G2 + AH2 = prostaglandin H2 + A + H2O. It carries out the reaction (9Z,12Z)-octadecadienoate + AH2 + O2 = (9R)-hydroxy-(10E,12Z)-octadecadienoate + A + H2O. The catalysed reaction is (9Z,12Z)-octadecadienoate + AH2 + O2 = (9S)-hydroxy-(10E,12Z)-octadecadienoate + A + H2O. It catalyses the reaction (9Z,12Z)-octadecadienoate + AH2 + O2 = (13S)-hydroxy-(9Z,11E)-octadecadienoate + A + H2O. The enzyme catalyses (9Z,12Z)-octadecadienoate + AH2 + O2 = (13R)-hydroxy-(9Z,11E)-octadecadienoate + A + H2O. The protein operates within lipid metabolism; prostaglandin biosynthesis. The cyclooxygenase activity is inhibited by nonsteroidal anti-inflammatory drugs (NSAIDs) including ibuprofen, flurbiprofen, ketoprofen, naproxen, flurbiprofen, anirolac, fenclofenac and diclofenac. Its function is as follows. Dual cyclooxygenase and peroxidase that plays an important role in the biosynthesis pathway of prostanoids, a class of C20 oxylipins mainly derived from arachidonate ((5Z,8Z,11Z,14Z)-eicosatetraenoate, AA, C20:4(n-6)), with a particular role in the inflammatory response. The cyclooxygenase activity oxygenates AA to the hydroperoxy endoperoxide prostaglandin G2 (PGG2), and the peroxidase activity reduces PGG2 to the hydroxy endoperoxide prostaglandin H2 (PGH2), the precursor of all 2-series prostaglandins and thromboxanes. This complex transformation is initiated by abstraction of hydrogen at carbon 13 (with S-stereochemistry), followed by insertion of molecular O2 to form the endoperoxide bridge between carbon 9 and 11 that defines prostaglandins. The insertion of a second molecule of O2 (bis-oxygenase activity) yields a hydroperoxy group in PGG2 that is then reduced to PGH2 by two electrons. Involved in the constitutive production of prostanoids in particular in the stomach and platelets. In gastric epithelial cells, it is a key step in the generation of prostaglandins, such as prostaglandin E2 (PGE2), which plays an important role in cytoprotection. In platelets, it is involved in the generation of thromboxane A2 (TXA2), which promotes platelet activation and aggregation, vasoconstriction and proliferation of vascular smooth muscle cells. Can also use linoleate (LA, (9Z,12Z)-octadecadienoate, C18:2(n-6)) as substrate and produce hydroxyoctadecadienoates (HODEs) in a regio- and stereospecific manner, being (9R)-HODE ((9R)-hydroxy-(10E,12Z)-octadecadienoate) and (13S)-HODE ((13S)-hydroxy-(9Z,11E)-octadecadienoate) its major products. The polypeptide is Prostaglandin G/H synthase 1 (PTGS1) (Oryctolagus cuniculus (Rabbit)).